The chain runs to 98 residues: Large ribosomal subunit protein mL53 (98 aa).

Belongs to the mitochondrion-specific ribosomal protein mL53 family. As to quaternary structure, component of the mitochondrial large ribosomal subunit (mt-LSU). Mature yeast 74S mitochondrial ribosomes consist of a small (37S) and a large (54S) subunit. The 37S small subunit contains a 15S ribosomal RNA (15S mt-rRNA) and 34 different proteins. The 54S large subunit contains a 21S rRNA (21S mt-rRNA) and 46 different proteins.

The protein localises to the mitochondrion. Component of the mitochondrial ribosome (mitoribosome), a dedicated translation machinery responsible for the synthesis of mitochondrial genome-encoded proteins, including at least some of the essential transmembrane subunits of the mitochondrial respiratory chain. The mitoribosomes are attached to the mitochondrial inner membrane and translation products are cotranslationally integrated into the membrane. This is Large ribosomal subunit protein mL53 (MRPL44) from Saccharomyces cerevisiae (strain ATCC 204508 / S288c) (Baker's yeast).